The following is a 246-amino-acid chain: E3 ubiquitin-protein ligase MARCHF2 (246 aa).

Residues 56 to 116 (DSQSDCPFCR…ELCHTEFAVE (61 aa)) form an RING-CH-type zinc finger. Residues C64, C67, C80, C82, H90, C93, C106, and C109 each contribute to the Zn(2+) site. The interval 121–246 (PLTEWLKDPG…LKKVAEETPV (126 aa)) is required for interaction with IKBKG. The next 2 membrane-spanning stretches (helical) occupy residues 138–158 (LCCD…SGWL) and 175–195 (AVGL…WTLV).

In terms of assembly, interacts with STX6; the interaction promotes MARCHF2-mediated ubiquitination and degradation of CFTR. Interacts with MARCHF3. Interacts with GOPC/CAL; the interaction leads to CFTR ubiquitination and degradation. Interacts with CFTR; the interaction leads to CFTR ubiqtuitination and degradation. Interacts (via PDZ domain) with DLG1 (via PDZ domains); the interaction leads to DLG1 ubiqtuitination and degradation. Interacts with ERGIC3. Interacts with ADRB2. Interacts with IKBKG/NEMO; during the late stages of macrophage viral and bacterial infection; the interaction leads to ubiquitination and degradation of IKBKG/NEMO.

Its subcellular location is the endoplasmic reticulum membrane. It is found in the lysosome membrane. The protein resides in the endosome membrane. The protein localises to the golgi apparatus membrane. It localises to the cytoplasm. Its subcellular location is the cell membrane. It carries out the reaction S-ubiquitinyl-[E2 ubiquitin-conjugating enzyme]-L-cysteine + [acceptor protein]-L-lysine = [E2 ubiquitin-conjugating enzyme]-L-cysteine + N(6)-ubiquitinyl-[acceptor protein]-L-lysine.. The protein operates within protein modification; protein ubiquitination. Functionally, E3 ubiquitin-protein ligase that may mediate ubiquitination of TFRC and CD86, and promote their subsequent endocytosis and sorting to lysosomes via multivesicular bodies. E3 ubiquitin ligases accept ubiquitin from an E2 ubiquitin-conjugating enzyme in the form of a thioester and then directly transfer the ubiquitin to targeted substrates. Together with GOPC/CAL mediates the ubiquitination and lysosomal degradation of CFTR. Ubiquitinates and therefore mediates the degradation of DLG1. Regulates the intracellular trafficking and secretion of alpha1-antitrypsin/SERPINA1 and HP/haptoglobin via ubiquitination and degradation of the cargo receptor ERGIC3. Negatively regulates the antiviral and antibacterial immune response by repression of the NF-kB and type 1 IFN signaling pathways, via MARCHF2-mediated K48-linked polyubiquitination of IKBKG/NEMO, resulting in its proteasomal degradation. May be involved in endosomal trafficking through interaction with STX6. The sequence is that of E3 ubiquitin-protein ligase MARCHF2 (Marchf2) from Mus musculus (Mouse).